Consider the following 216-residue polypeptide: Pyridoxine/pyridoxamine 5'-phosphate oxidase (216 aa).

Substrate-binding positions include 12–15 (RREY) and Lys70. FMN contacts are provided by residues 65–70 (RLVLLK), 80–81 (YT), Arg86, Lys87, and Gln109. Positions 127, 131, and 135 each coordinate substrate. FMN is bound by residues 144–145 (QS) and Trp189. Residue 195–197 (RLH) coordinates substrate. Position 199 (Arg199) interacts with FMN.

It belongs to the pyridoxamine 5'-phosphate oxidase family. Homodimer. FMN is required as a cofactor.

It catalyses the reaction pyridoxamine 5'-phosphate + O2 + H2O = pyridoxal 5'-phosphate + H2O2 + NH4(+). The enzyme catalyses pyridoxine 5'-phosphate + O2 = pyridoxal 5'-phosphate + H2O2. Its pathway is cofactor metabolism; pyridoxal 5'-phosphate salvage; pyridoxal 5'-phosphate from pyridoxamine 5'-phosphate: step 1/1. It functions in the pathway cofactor metabolism; pyridoxal 5'-phosphate salvage; pyridoxal 5'-phosphate from pyridoxine 5'-phosphate: step 1/1. Its function is as follows. Catalyzes the oxidation of either pyridoxine 5'-phosphate (PNP) or pyridoxamine 5'-phosphate (PMP) into pyridoxal 5'-phosphate (PLP). The sequence is that of Pyridoxine/pyridoxamine 5'-phosphate oxidase from Baumannia cicadellinicola subsp. Homalodisca coagulata.